The chain runs to 262 residues: PsbP domain-containing protein 6, chloroplastic (262 aa).

An intrachain disulfide couples Cys128 to Cys132.

Belongs to the PsbP family.

The protein localises to the plastid. Its subcellular location is the chloroplast thylakoid lumen. Functionally, may be involved in the redox regulation of photosystem II. This Arabidopsis thaliana (Mouse-ear cress) protein is PsbP domain-containing protein 6, chloroplastic (PPD6).